A 213-amino-acid chain; its full sequence is Type II restriction enzyme BamHI (213 aa).

Glu-77, Asp-94, Glu-111, and Phe-112 together coordinate Mg(2+). Catalysis depends on Glu-113, which acts as the Proton acceptor.

Homodimer. It depends on Mg(2+) as a cofactor.

The enzyme catalyses Endonucleolytic cleavage of DNA to give specific double-stranded fragments with terminal 5'-phosphates.. A P subtype restriction enzyme that recognizes the double-stranded sequence 5'-GGATCC-3' and cleaves after G-1. The polypeptide is Type II restriction enzyme BamHI (Bacillus amyloliquefaciens (Bacillus velezensis)).